The chain runs to 257 residues: UPF0246 protein YaaA (257 aa).

The protein belongs to the UPF0246 family.

This chain is UPF0246 protein YaaA, found in Salmonella choleraesuis (strain SC-B67).